We begin with the raw amino-acid sequence, 500 residues long: Protein DETOXIFICATION 29 (500 aa).

Helical transmembrane passes span Gly67 to Val87, Val91 to Cys111, Val132 to Leu152, Ile161 to Ile181, Val197 to Ile217, Leu227 to Phe247, Ala277 to Leu297, Ile302 to Ile322, Leu349 to Phe369, Ile393 to Gly413, Val419 to Leu439, and Gly449 to Ile469.

Belongs to the multi antimicrobial extrusion (MATE) (TC 2.A.66.1) family.

The protein resides in the vacuole membrane. In Arabidopsis thaliana (Mouse-ear cress), this protein is Protein DETOXIFICATION 29.